Consider the following 674-residue polypeptide: F420-dependent formate dehydrogenase 1 subunit alpha (674 aa).

A 4Fe-4S Mo/W bis-MGD-type domain is found at 3–59; that stretch reads LDFIHTICPYCGTGCGVDLVVKDGTLVGTNPFKRHPVNEGKTCIKGSYCHEFVHRDD. Cys10, Cys13, Cys17, and Cys45 together coordinate [4Fe-4S] cluster. A non-standard amino acid (selenocysteine) is located at residue Sec132.

This sequence belongs to the prokaryotic molybdopterin-containing oxidoreductase family. Dimer of an alpha (FdhA1) and a beta (FdhB1) subunit. [4Fe-4S] cluster is required as a cofactor. The cofactor is Mo-bis(molybdopterin guanine dinucleotide). It depends on Zn(2+) as a cofactor.

It catalyses the reaction oxidized coenzyme F420-(gamma-L-Glu)(n) + formate + 2 H(+) = reduced coenzyme F420-(gamma-L-Glu)(n) + CO2. Catalyzes the oxidation of formate to carbon dioxide, with coenzyme F420 as the electron acceptor. In vitro can also use methyl viologen as electron acceptor. In Methanococcus maripaludis (strain DSM 14266 / JCM 13030 / NBRC 101832 / S2 / LL), this protein is F420-dependent formate dehydrogenase 1 subunit alpha.